The sequence spans 292 residues: Ribosomal RNA small subunit methyltransferase A (292 aa).

Asn-28, Leu-30, Gly-55, Glu-76, Asp-101, and Asn-126 together coordinate S-adenosyl-L-methionine.

This sequence belongs to the class I-like SAM-binding methyltransferase superfamily. rRNA adenine N(6)-methyltransferase family. RsmA subfamily.

The protein resides in the cytoplasm. The enzyme catalyses adenosine(1518)/adenosine(1519) in 16S rRNA + 4 S-adenosyl-L-methionine = N(6)-dimethyladenosine(1518)/N(6)-dimethyladenosine(1519) in 16S rRNA + 4 S-adenosyl-L-homocysteine + 4 H(+). Specifically dimethylates two adjacent adenosines (A1518 and A1519) in the loop of a conserved hairpin near the 3'-end of 16S rRNA in the 30S particle. May play a critical role in biogenesis of 30S subunits. The chain is Ribosomal RNA small subunit methyltransferase A from Bacillus thuringiensis (strain Al Hakam).